The primary structure comprises 571 residues: MRMDTLDSQAADAAQEEEIQRKLEELVTLAKDQGFITYEEINEILPPSFDSPEQIDQVLIFLAGMDVQVLNQADVERQKERKKEAKELEGLAKRSEGTPDDPVRMYLKEMGTVPLLTREEEVEISKRIEKAQVQIERIILRFRYSTKEAVSIAQYLINGKERFDKIVSEKEVEDKTHFLNLLPKLISLLKEEDSYLEERLLALKDPALSKQDQAKLNDELEKCRIRTQAYLRCFHCRHNVTEDFGEVVFKAYDSFLQLEQQINDLKVRAERNKFAAAKLAAARRKLYKREVAAGRTLEEFKKDVRMLQRWMDKSQEAKKEMVESNLRLVISIAKKYTNRGLSFLDLIQEGNMGLMKAVEKFEYRRGYKFSTYATWWIRQAVTRAIADQARTIRIPVHMIETINKVLRGAKKLMMETGKEPTPEELGEELGFTPDRVREIYKIAQHPISLQAEVGDSGESSFGDFLEDTAVESPAEATGYSMLKDKMKEVLKTLTDRERFVLIHRFGLLDGRPKTLEEVGSAFNVTRERIRQIEAKALRKMRHPIRSKQLRAFLDLLEEEKTGSGKIKSYKN.

Residues 321–391 (MVESNLRLVI…TRAIADQART (71 aa)) are sigma-70 factor domain-2. The Interaction with polymerase core subunit RpoC signature appears at 345–348 (DLIQ). The segment at 400 to 476 (ETINKVLRGA…DTAVESPAEA (77 aa)) is sigma-70 factor domain-3. The interval 489–542 (VLKTLTDRERFVLIHRFGLLDGRPKTLEEVGSAFNVTRERIRQIEAKALRKMRH) is sigma-70 factor domain-4. Positions 515–534 (LEEVGSAFNVTRERIRQIEA) form a DNA-binding region, H-T-H motif.

This sequence belongs to the sigma-70 factor family. RpoD/SigA subfamily. In terms of assembly, interacts transiently with the RNA polymerase catalytic core.

The protein resides in the cytoplasm. In terms of biological role, sigma factors are initiation factors that promote the attachment of RNA polymerase to specific initiation sites and are then released. This sigma factor is the primary sigma factor during exponential growth. The sequence is that of RNA polymerase sigma factor SigA from Chlamydia muridarum (strain MoPn / Nigg).